The sequence spans 1356 residues: Vascular endothelial growth factor receptor 2 (1356 aa).

The first 19 residues, 1-19, serve as a signal peptide directing secretion; it reads MQSKVLLAVALWLCVETRA. Over 20 to 764 the chain is Extracellular; that stretch reads ASVGLPSVSL…EGAQEKTNLE (745 aa). Asn-46, Asn-66, Asn-96, Asn-143, Asn-158, and Asn-245 each carry an N-linked (GlcNAc...) asparagine glycan. Ig-like C2-type domains follow at residues 46-110, 141-207, 224-320, 328-414, 421-548, 551-660, and 667-753; these read NTTL…ETDL, NKNK…INDE, YDVV…KNST, PFVA…HVVS, PQIG…FHVT, PEIT…RQLT, and PTIT…AFFI. Cys-53 and Cys-103 form a disulfide bridge. A disulfide bridge connects residues Cys-150 and Cys-200. A disulfide bridge connects residues Cys-246 and Cys-307. Asn-318, Asn-374, Asn-395, Asn-511, Asn-523, Asn-580, Asn-613, Asn-619, Asn-631, Asn-675, Asn-704, and Asn-721 each carry an N-linked (GlcNAc...) asparagine glycan. 2 disulfide bridges follow: Cys-445-Cys-530 and Cys-571-Cys-642. An intrachain disulfide couples Cys-688 to Cys-737. The helical transmembrane segment at 765-785 threads the bilayer; the sequence is IIILVGTAVIAMFFWLLLVII. The Cytoplasmic portion of the chain corresponds to 786–1356; sequence LRTVKRANGG…SGTTLSSPPV (571 aa). Tyr-801 is modified (phosphotyrosine). One can recognise a Protein kinase domain in the interval 834-1162; sequence LKLGKPLGRG…FSELVEHLGN (329 aa). ATP is bound by residues 840 to 848 and Lys-868; that span reads LGRGAFGQV. Tyr-951 bears the Phosphotyrosine; by autocatalysis mark. A phosphoserine mark is found at Ser-982 and Ser-984. Tyr-996 bears the Phosphotyrosine; by autocatalysis mark. Cysteines 1024 and 1045 form a disulfide. The Proton acceptor role is filled by Asp-1028. Phosphotyrosine; by autocatalysis occurs at positions 1054, 1059, 1175, and 1214. Residues Ser-1231 and Ser-1235 each carry the phosphoserine modification. Phosphothreonine is present on Thr-1238. The segment at 1274 to 1318 is disordered; that stretch reads DRTKLSPSFGGMVPSKSRESVASEGSNQTSGYQSGYHSDDTDTTV. The span at 1296–1309 shows a compositional bias: polar residues; it reads SEGSNQTSGYQSGY. Phosphotyrosine; by autocatalysis occurs at positions 1305, 1309, and 1319.

Belongs to the protein kinase superfamily. Tyr protein kinase family. CSF-1/PDGF receptor subfamily. Homodimer in the presence of bound dimeric VEGFA, VEGFC or VEGFD ligands; monomeric in the absence of bound ligands. Can also form heterodimers with FLT1/VEGFR1 and KDR/VEGFR2. Interacts (tyrosine phosphorylated) with LFYN, NCK1, PLCG1. Interacts (tyrosine-phosphorylated active form preferentially) with DAB2IP (via C2 domain and active form preferentially); the interaction occurs at the late phase of VEGFA response and inhibits KDR/VEGFR2 activity. Interacts with SHBSH2D2A/TSAD, GRB2, MYOF, CBL and PDCD6. Interacts (via C-terminus domain) with ERN1 (via kinase domain); the interaction is facilitated in a XBP1 isoform 1- and vascular endothelial growth factor (VEGF)-dependent manner in endothelial cells. Interacts (via juxtamembrane region) with chaperone PDCL3 (via thioredoxin fold region); the interaction leads to increased KDR/VEGFR2 abundance through inhibition of its ubiquitination and degradation. Interacts (tyrosine phosphorylated) with CCDC88A/GIV (via SH2-like region); binding requires autophosphorylation of the KDR/VEGFR2 C-terminal region. Interacts with isoform 2 of BSG. Interacts with SLC31A1; this interaction is induced upon VEGFA stimulation leading to SLC31A1 and KDR subsequent co-internalization to early endosomes, thereby activating KDR downstream signaling in endothelial cells. As to quaternary structure, (Microbial infection) Interacts with HIV-1 Tat. In terms of processing, N-glycosylated. Post-translationally, ubiquitinated. Tyrosine phosphorylation of the receptor promotes its poly-ubiquitination, leading to its degradation via the proteasome or lysosomal proteases. Autophosphorylated on tyrosine residues upon ligand binding. Autophosphorylation occurs in trans, i.e. one subunit of the dimeric receptor phosphorylates tyrosine residues on the other subunit. Phosphorylation at Tyr-951 is important for interaction with SH2D2A/TSAD and VEGFA-mediated reorganization of the actin cytoskeleton. Phosphorylation at Tyr-1175 is important for interaction with PLCG1 and SHB. Phosphorylation at Tyr-1214 is important for interaction with NCK1 and FYN. Dephosphorylated by PTPRB. Dephosphorylated by PTPRJ at Tyr-951, Tyr-996, Tyr-1054, Tyr-1059, Tyr-1175 and Tyr-1214. In terms of processing, the inhibitory disulfide bond between Cys-1024 and Cys-1045 may serve as a specific molecular switch for H(2)S-induced modification that regulates KDR/VEGFR2 function. As to expression, detected in cornea (at protein level). Widely expressed.

Its subcellular location is the cell junction. It is found in the endoplasmic reticulum. It localises to the cell membrane. The protein localises to the cytoplasm. The protein resides in the nucleus. Its subcellular location is the cytoplasmic vesicle. It is found in the early endosome. It localises to the secreted. The catalysed reaction is L-tyrosyl-[protein] + ATP = O-phospho-L-tyrosyl-[protein] + ADP + H(+). Its activity is regulated as follows. Present in an inactive conformation in the absence of bound ligand. Binding of VEGFA, VEGFC or VEGFD leads to dimerization and activation by autophosphorylation on tyrosine residues. Inhibited by the small molecule PTK inhibitor SU5614 ((3Z)-5-Chloro-3-[(3,5-dimethyl-1H-pyrrol-2-yl)methylene]-1,3-dihydro-2H-indol-2-one). May be regulated by hydrogen sulfide (H(2)S) levels via a H(2)S-sensitive intracellular disulfide bond. Tyrosine-protein kinase that acts as a cell-surface receptor for VEGFA, VEGFC and VEGFD. Plays an essential role in the regulation of angiogenesis, vascular development, vascular permeability, and embryonic hematopoiesis. Promotes proliferation, survival, migration and differentiation of endothelial cells. Promotes reorganization of the actin cytoskeleton. Isoforms lacking a transmembrane domain, such as isoform 2 and isoform 3, may function as decoy receptors for VEGFA, VEGFC and/or VEGFD. Isoform 2 plays an important role as negative regulator of VEGFA- and VEGFC-mediated lymphangiogenesis by limiting the amount of free VEGFA and/or VEGFC and preventing their binding to FLT4. Modulates FLT1 and FLT4 signaling by forming heterodimers. Binding of vascular growth factors to isoform 1 leads to the activation of several signaling cascades. Activation of PLCG1 leads to the production of the cellular signaling molecules diacylglycerol and inositol 1,4,5-trisphosphate and the activation of protein kinase C. Mediates activation of MAPK1/ERK2, MAPK3/ERK1 and the MAP kinase signaling pathway, as well as of the AKT1 signaling pathway. Mediates phosphorylation of PIK3R1, the regulatory subunit of phosphatidylinositol 3-kinase, reorganization of the actin cytoskeleton and activation of PTK2/FAK1. Required for VEGFA-mediated induction of NOS2 and NOS3, leading to the production of the signaling molecule nitric oxide (NO) by endothelial cells. Phosphorylates PLCG1. Promotes phosphorylation of FYN, NCK1, NOS3, PIK3R1, PTK2/FAK1 and SRC. This chain is Vascular endothelial growth factor receptor 2, found in Homo sapiens (Human).